The chain runs to 208 residues: Component of Sp100-rs (208 aa).

Residues 6 to 121 (GSPRMSTEQE…LRRSFECGAK (116 aa)) enclose the HSR domain.

This is Component of Sp100-rs (Csprs) from Mus musculus (Mouse).